A 306-amino-acid chain; its full sequence is Acetaldehyde dehydrogenase (306 aa).

The active-site Acyl-thioester intermediate is Cys131. Residues 162-170 (SAGPGTRKN) and Asn273 contribute to the NAD(+) site.

It belongs to the acetaldehyde dehydrogenase family.

It catalyses the reaction acetaldehyde + NAD(+) + CoA = acetyl-CoA + NADH + H(+). This Albidiferax ferrireducens (strain ATCC BAA-621 / DSM 15236 / T118) (Rhodoferax ferrireducens) protein is Acetaldehyde dehydrogenase.